The chain runs to 469 residues: Argininosuccinate lyase (469 aa).

The protein belongs to the lyase 1 family. Argininosuccinate lyase subfamily.

The protein localises to the cytoplasm. The enzyme catalyses 2-(N(omega)-L-arginino)succinate = fumarate + L-arginine. The protein operates within amino-acid biosynthesis; L-arginine biosynthesis; L-arginine from L-ornithine and carbamoyl phosphate: step 3/3. The polypeptide is Argininosuccinate lyase (Burkholderia cenocepacia (strain ATCC BAA-245 / DSM 16553 / LMG 16656 / NCTC 13227 / J2315 / CF5610) (Burkholderia cepacia (strain J2315))).